We begin with the raw amino-acid sequence, 290 residues long: Small ribosomal subunit protein uS2 (290 aa).

The span at 263-282 (ATAGATWEAEAGGDWAAESA) shows a compositional bias: low complexity. The disordered stretch occupies residues 263–290 (ATAGATWEAEAGGDWAAESAQPNPETKW).

It belongs to the universal ribosomal protein uS2 family. As to quaternary structure, component of the small ribosomal subunit. Mature ribosomes consist of a small (40S) and a large (60S) subunit. The 40S subunit contains about 33 different proteins and 1 molecule of RNA (18S). The 60S subunit contains about 49 different proteins and 3 molecules of RNA (25S, 5.8S and 5S). Interacts with rps21.

The protein resides in the cytoplasm. Required for the assembly and/or stability of the 40S ribosomal subunit. Required for the processing of the 20S rRNA-precursor to mature 18S rRNA in a late step of the maturation of 40S ribosomal subunits. This is Small ribosomal subunit protein uS2 (rps0) from Talaromyces stipitatus (strain ATCC 10500 / CBS 375.48 / QM 6759 / NRRL 1006) (Penicillium stipitatum).